A 432-amino-acid chain; its full sequence is 23S rRNA (uracil(1939)-C(5))-methyltransferase RlmD (432 aa).

One can recognise a TRAM domain in the interval 1–53; it reads MPIGKIESLDHEARGITRQEGKAIFVDGALPGETVEYASFRRKSKFELAHLVH. C66, C72, C75, and C154 together coordinate [4Fe-4S] cluster. Q263, F292, N297, E313, N341, and D362 together coordinate S-adenosyl-L-methionine. The Nucleophile role is filled by C388.

It belongs to the class I-like SAM-binding methyltransferase superfamily. RNA M5U methyltransferase family. RlmD subfamily.

The enzyme catalyses uridine(1939) in 23S rRNA + S-adenosyl-L-methionine = 5-methyluridine(1939) in 23S rRNA + S-adenosyl-L-homocysteine + H(+). Its function is as follows. Catalyzes the formation of 5-methyl-uridine at position 1939 (m5U1939) in 23S rRNA. This chain is 23S rRNA (uracil(1939)-C(5))-methyltransferase RlmD, found in Dechloromonas aromatica (strain RCB).